Here is a 299-residue protein sequence, read N- to C-terminus: HTH-type transcriptional regulator CysL (299 aa).

The HTH lysR-type domain maps to M1–T58. Positions F18–K37 form a DNA-binding region, H-T-H motif.

Belongs to the LysR transcriptional regulatory family.

Transcriptional activator of the cysJI operon which is involved in sulfur assimilation. Also negatively regulates its own transcription. This chain is HTH-type transcriptional regulator CysL (cysL), found in Bacillus subtilis (strain 168).